The chain runs to 205 residues: Probable GTP-binding protein EngB (205 aa).

The EngB-type G domain occupies 29 to 203 (QGAEIAFIGR…KAVLSQWFRS (175 aa)). Residues 37-44 (GRSNAGKS), 64-68 (GRTQM), 82-85 (DLPG), 149-152 (TKSD), and 182-184 (FSS) each bind GTP. Mg(2+)-binding residues include Ser-44 and Thr-66.

It belongs to the TRAFAC class TrmE-Era-EngA-EngB-Septin-like GTPase superfamily. EngB GTPase family. Requires Mg(2+) as cofactor.

In terms of biological role, necessary for normal cell division and for the maintenance of normal septation. This chain is Probable GTP-binding protein EngB, found in Coxiella burnetii (strain RSA 331 / Henzerling II).